The sequence spans 201 residues: 3-isopropylmalate dehydratase small subunit (201 aa).

This sequence belongs to the LeuD family. LeuD type 1 subfamily. Heterodimer of LeuC and LeuD.

The catalysed reaction is (2R,3S)-3-isopropylmalate = (2S)-2-isopropylmalate. It participates in amino-acid biosynthesis; L-leucine biosynthesis; L-leucine from 3-methyl-2-oxobutanoate: step 2/4. Functionally, catalyzes the isomerization between 2-isopropylmalate and 3-isopropylmalate, via the formation of 2-isopropylmaleate. In Sinorhizobium fredii (strain NBRC 101917 / NGR234), this protein is 3-isopropylmalate dehydratase small subunit.